A 334-amino-acid polypeptide reads, in one-letter code: tRNA-dihydrouridine(20/20a) synthase (334 aa).

FMN-binding positions include 17–19 (PMM) and glutamine 70. Residue cysteine 100 is the Proton donor of the active site. FMN-binding positions include lysine 139, histidine 171, 211-213 (NGG), and 233-234 (GR).

It belongs to the Dus family. DusA subfamily. FMN is required as a cofactor.

The enzyme catalyses 5,6-dihydrouridine(20) in tRNA + NADP(+) = uridine(20) in tRNA + NADPH + H(+). It catalyses the reaction 5,6-dihydrouridine(20) in tRNA + NAD(+) = uridine(20) in tRNA + NADH + H(+). The catalysed reaction is 5,6-dihydrouridine(20a) in tRNA + NADP(+) = uridine(20a) in tRNA + NADPH + H(+). It carries out the reaction 5,6-dihydrouridine(20a) in tRNA + NAD(+) = uridine(20a) in tRNA + NADH + H(+). In terms of biological role, catalyzes the synthesis of 5,6-dihydrouridine (D), a modified base found in the D-loop of most tRNAs, via the reduction of the C5-C6 double bond in target uridines. Specifically modifies U20 and U20a in tRNAs. The sequence is that of tRNA-dihydrouridine(20/20a) synthase (dus2) from Synechocystis sp. (strain ATCC 27184 / PCC 6803 / Kazusa).